The chain runs to 80 residues: Large ribosomal subunit protein bL31 (80 aa).

Residues C16, C18, C38, and C41 each coordinate Zn(2+).

It belongs to the bacterial ribosomal protein bL31 family. Type A subfamily. In terms of assembly, part of the 50S ribosomal subunit. Requires Zn(2+) as cofactor.

Functionally, binds the 23S rRNA. This is Large ribosomal subunit protein bL31 from Mycobacterium avium (strain 104).